The primary structure comprises 185 residues: MIKDILSDTEERMKKTIEHLRKDLASLRAGRANPAMLEKIMVDYYGQPTPINQLANITVPEARLLVIQPWDKTIIASIEKAIMKSDLGINPSNDGNVIRLVIPQLTEERRKELVKVLRKRAEEARVAVRNIRRDSNELLKSGEKEKLISEDDNKKGMDDIQKETDRHIKEIDSILQGKEKEIMEV.

Residues 143–163 are disordered; sequence EKEKLISEDDNKKGMDDIQKE.

It belongs to the RRF family.

The protein localises to the cytoplasm. Its function is as follows. Responsible for the release of ribosomes from messenger RNA at the termination of protein biosynthesis. May increase the efficiency of translation by recycling ribosomes from one round of translation to another. The polypeptide is Ribosome-recycling factor (Syntrophomonas wolfei subsp. wolfei (strain DSM 2245B / Goettingen)).